Here is a 396-residue protein sequence, read N- to C-terminus: NAD(P)H oxidoreductase RTN4IP1, mitochondrial (396 aa).

The transit peptide at 1–40 directs the protein to the mitochondrion; the sequence is MEFLKTCVLRRNACTAVCFWRSKVVQKPSVRRISTTSPRS. Residues 52–393 enclose the Enoyl reductase (ER) domain; that stretch reads GKNEVLRFTQ…RGHARGKTVI (342 aa). Positions 214, 216, 217, 237, 255, 276, 300, 341, 343, 386, 387, and 388 each coordinate NADPH.

It belongs to the zinc-containing alcohol dehydrogenase family. Quinone oxidoreductase subfamily. Interacts with RTN4, UQCRC1 and UQCRC2. Widely expressed in mitochondria-enriched tissues. Found in heart, muscle, kidney, liver, brain and placenta.

The protein localises to the mitochondrion matrix. The protein resides in the mitochondrion outer membrane. The catalysed reaction is a 3-demethylubiquinone + NADH + 2 H(+) = a 3-demethylubiquinol + NAD(+). It carries out the reaction a 3-demethylubiquinone + NADPH + 2 H(+) = a 3-demethylubiquinol + NADP(+). The enzyme catalyses 3-demethylubiquinone-10 + NADH + 2 H(+) = 3-demethylubiquinol-10 + NAD(+). It catalyses the reaction 3-demethylubiquinone-10 + NADPH + 2 H(+) = 3-demethylubiquinol-10 + NADP(+). The protein operates within cofactor biosynthesis; ubiquinone biosynthesis. Functionally, NAD(P)H oxidoreductase involved in the ubiquinone biosynthetic pathway. Required for the O-methyltransferase activity of COQ3. Able to catalyze the oxidoreduction of 3-demethylubiquinone into 3-demethylubiquinol in vitro. However, it is unclear if 3-demethylubiquinone constitutes a substrate in vivo. May also play a role in the regulation of retinal ganglion cell (RGC) neurite outgrowth, and hence in the development of the inner retina and optic nerve. Appears to be a potent inhibitor of regeneration following spinal cord injury. The sequence is that of NAD(P)H oxidoreductase RTN4IP1, mitochondrial from Homo sapiens (Human).